The sequence spans 292 residues: Protoheme IX farnesyltransferase (292 aa).

9 helical membrane passes run 11 to 31 (FGIVVFSVLAGLAGYATGFQI), 37 to 57 (WKIFLETLLGIYFLSSGSLAL), 85 to 105 (AAAGILSVGLLLVGMNMLFKL), 108 to 128 (VAGWVGLFCVFLYNGPYTLWW), 133 to 153 (VFAAVPGAIPGALPVTIGYAV), 163 to 183 (SLYLFLIMFLWQMPHFWVLAI), 199 to 219 (VALGMEKTMFQVGLYTLVYVG), 223 to 243 (AAPMFVHASWMFVLLTFPFVF), and 261 to 281 (WLAFFMWLNVSMLVFIIIPVI).

This sequence belongs to the UbiA prenyltransferase family. Protoheme IX farnesyltransferase subfamily.

It is found in the cell inner membrane. It catalyses the reaction heme b + (2E,6E)-farnesyl diphosphate + H2O = Fe(II)-heme o + diphosphate. Its pathway is porphyrin-containing compound metabolism; heme O biosynthesis; heme O from protoheme: step 1/1. In terms of biological role, converts heme B (protoheme IX) to heme O by substitution of the vinyl group on carbon 2 of heme B porphyrin ring with a hydroxyethyl farnesyl side group. This is Protoheme IX farnesyltransferase from Bdellovibrio bacteriovorus (strain ATCC 15356 / DSM 50701 / NCIMB 9529 / HD100).